The primary structure comprises 133 residues: UPF0344 protein SH1980 (133 aa).

The next 4 membrane-spanning stretches (helical) occupy residues Met1–Leu21, Val42–Ala62, Met71–Ile91, and Leu103–Trp123.

Belongs to the UPF0344 family.

The protein resides in the cell membrane. This Staphylococcus haemolyticus (strain JCSC1435) protein is UPF0344 protein SH1980.